The sequence spans 243 residues: 1-(5-phosphoribosyl)-5-[(5-phosphoribosylamino)methylideneamino] imidazole-4-carboxamide isomerase (243 aa).

The active-site Proton acceptor is Asp8. Asp130 acts as the Proton donor in catalysis.

This sequence belongs to the HisA/HisF family.

The protein localises to the cytoplasm. It carries out the reaction 1-(5-phospho-beta-D-ribosyl)-5-[(5-phospho-beta-D-ribosylamino)methylideneamino]imidazole-4-carboxamide = 5-[(5-phospho-1-deoxy-D-ribulos-1-ylimino)methylamino]-1-(5-phospho-beta-D-ribosyl)imidazole-4-carboxamide. It participates in amino-acid biosynthesis; L-histidine biosynthesis; L-histidine from 5-phospho-alpha-D-ribose 1-diphosphate: step 4/9. This chain is 1-(5-phosphoribosyl)-5-[(5-phosphoribosylamino)methylideneamino] imidazole-4-carboxamide isomerase, found in Acinetobacter baumannii (strain SDF).